The following is a 128-amino-acid chain: Small nuclear ribonucleoprotein SmD3a (128 aa).

A Sm domain is found at 7 to 79 (IPVKLLHESS…VRFLVIPDML (73 aa)). The disordered stretch occupies residues 90–128 (GKGKSASLGVGRGRGAAMRAKGTGRGTGGGRGAVPPVRR). Residues 112–121 (TGRGTGGGRG) show a composition bias toward gly residues.

The protein belongs to the snRNP core protein family. Expressed in young seedlings, roots, leaves, flowers and immature siliques.

It localises to the cytoplasm. Its subcellular location is the cytosol. The protein resides in the nucleus. In terms of biological role, core component of the spliceosomal U1, U2, U4 and U5 small nuclear ribonucleoproteins (snRNPs), the building blocks of the spliceosome. May play a minor role in the splicing of cellular pre-mRNAs. The sequence is that of Small nuclear ribonucleoprotein SmD3a from Arabidopsis thaliana (Mouse-ear cress).